We begin with the raw amino-acid sequence, 155 residues long: Ribosomal RNA large subunit methyltransferase H (155 aa).

Residues L73, G104, and 123-128 (LSPLTL) each bind S-adenosyl-L-methionine.

It belongs to the RNA methyltransferase RlmH family. As to quaternary structure, homodimer.

Its subcellular location is the cytoplasm. It carries out the reaction pseudouridine(1915) in 23S rRNA + S-adenosyl-L-methionine = N(3)-methylpseudouridine(1915) in 23S rRNA + S-adenosyl-L-homocysteine + H(+). Its function is as follows. Specifically methylates the pseudouridine at position 1915 (m3Psi1915) in 23S rRNA. This is Ribosomal RNA large subunit methyltransferase H from Pseudomonas putida (strain ATCC 700007 / DSM 6899 / JCM 31910 / BCRC 17059 / LMG 24140 / F1).